The sequence spans 674 residues: Sodium/hydrogen exchanger 1 (674 aa).

The first 24 residues, 1-24 (MKLNKSYILIVVLLLSLFYSSVSS), serve as a signal peptide directing secretion. Residues 31 to 65 (KSNNHYNSDNSNNDNKNININNNNDGDGDDDDDNN) form a disordered region. A compositionally biased stretch (low complexity) spans 37 to 55 (NSDNSNNDNKNININNNND). The next 12 membrane-spanning stretches (helical) occupy residues 120–140 (TIIF…YFII), 144–164 (IPFV…GIVF), 175–195 (VVSF…IFET), 213–233 (MFAV…IYIV), 275–297 (LYIL…YSVV), 314–334 (VVAI…SLIL), 336–356 (WINI…FSYM), 359–379 (VLAG…GITL), 401–421 (TAAF…LTAH), 432–452 (WSIL…CFLL), 460–480 (IPWV…FAFS), and 499–519 (NTLL…YPLL). Residues 591-674 (HELDSNPLRF…NKNNDTLPLI (84 aa)) are disordered. Residues 601-618 (DDDEEDDDDEDLDFDSDL) show a composition bias toward acidic residues. The segment covering 627-657 (DSIHQSDNNNNDNGNNNNNNNNIIINNNSQH) has biased composition (low complexity). Residues 662 to 674 (GSNNKNNDTLPLI) are compositionally biased toward polar residues.

It belongs to the monovalent cation:proton antiporter 1 (CPA1) transporter (TC 2.A.36) family.

The protein localises to the membrane. With respect to regulation, LY294002, an inhibitor of the catalytic subunit of PI3-kinase, blocks NHE1-dependent (but not NHE1-independent) increase in intracellular pH in response to cAMP. Its function is as follows. Regulation of intracellular pH homeostasis in response to cAMP, which is essential for chemotaxis. Necessary for F-actin localization and the kinetics of actin polymerization during chemotaxis and cell polarity but not for directional sensing. The protein is Sodium/hydrogen exchanger 1 (nhe1) of Dictyostelium discoideum (Social amoeba).